Consider the following 255-residue polypeptide: Vitamin B12 import ATP-binding protein BtuD (255 aa).

The region spanning 2 to 240 is the ABC transporter domain; it reads MRVKHIAVGS…AGLAEVFKTQ (239 aa). An ATP-binding site is contributed by 30–37; sequence GPNGSGKS.

The protein belongs to the ABC transporter superfamily. Vitamin B12 importer (TC 3.A.1.13.1) family. As to quaternary structure, the complex is composed of two ATP-binding proteins (BtuD), two transmembrane proteins (BtuC) and a solute-binding protein (BtuF).

The protein resides in the cell inner membrane. The catalysed reaction is an R-cob(III)alamin(out) + ATP + H2O = an R-cob(III)alamin(in) + ADP + phosphate + H(+). Its function is as follows. Part of the ABC transporter complex BtuCDF involved in vitamin B12 import. Responsible for energy coupling to the transport system. In Vibrio parahaemolyticus serotype O3:K6 (strain RIMD 2210633), this protein is Vitamin B12 import ATP-binding protein BtuD.